Reading from the N-terminus, the 844-residue chain is DNA mismatch repair protein MutS (844 aa).

An ATP-binding site is contributed by glycine 602–serine 609.

This sequence belongs to the DNA mismatch repair MutS family.

In terms of biological role, this protein is involved in the repair of mismatches in DNA. It is possible that it carries out the mismatch recognition step. This protein has a weak ATPase activity. This chain is DNA mismatch repair protein MutS, found in Streptococcus pneumoniae serotype 19F (strain G54).